The following is a 428-amino-acid chain: Oxysterol-binding protein 9 (428 aa).

Positions 1-11 (MTEVQSITTSG) are enriched in polar residues. Disordered stretches follow at residues 1–32 (MTEVQSITTSGEIKMPLSPSSSSSSISSSTTN) and 396–428 (ALIEDNQRKQKKEKDEKLKKDEKLKKEDKKNQK). Residues 18–32 (SPSSSSSSISSSTTN) are compositionally biased toward low complexity. Residues 389 to 422 (EEAKKYKALIEDNQRKQKKEKDEKLKKDEKLKKE) adopt a coiled-coil conformation.

This sequence belongs to the OSBP family.

The polypeptide is Oxysterol-binding protein 9 (osbI) (Dictyostelium discoideum (Social amoeba)).